Reading from the N-terminus, the 215-residue chain is Glycerol-3-phosphate acyltransferase (215 aa).

A run of 6 helical transmembrane segments spans residues 3–23 (LILLILTAYLLGSIPTGLWIG), 42–61 (TNTFRILGLKAGAATLLIDI), 68–90 (TLLPVLVGASNVSPIAIGFFAVL), 110–130 (AGVLLGFAPLYLLFLAAVFVL), 134–154 (LFSMISLASLTASVVAVISVL), and 162–182 (LLPGYDWLLTITIVVLAAIII).

The protein belongs to the PlsY family. In terms of assembly, probably interacts with PlsX.

Its subcellular location is the cell membrane. It catalyses the reaction an acyl phosphate + sn-glycerol 3-phosphate = a 1-acyl-sn-glycero-3-phosphate + phosphate. The protein operates within lipid metabolism; phospholipid metabolism. Its function is as follows. Catalyzes the transfer of an acyl group from acyl-phosphate (acyl-PO(4)) to glycerol-3-phosphate (G3P) to form lysophosphatidic acid (LPA). This enzyme utilizes acyl-phosphate as fatty acyl donor, but not acyl-CoA or acyl-ACP. This Streptococcus equi subsp. zooepidemicus (strain H70) protein is Glycerol-3-phosphate acyltransferase.